Reading from the N-terminus, the 74-residue chain is ATP synthase subunit 9, mitochondrial (74 aa).

The next 2 helical transmembrane spans lie at 16 to 36 and 50 to 70; these read GLIG…LGVA and ILGF…AFLL.

The protein belongs to the ATPase C chain family. As to quaternary structure, F-type ATPases have 2 components, CF(1) - the catalytic core - and CF(0) - the membrane proton channel. CF(1) has five subunits: alpha(3), beta(3), gamma(1), delta(1), epsilon(1). CF(0) has three main subunits: a, b and c.

The protein resides in the mitochondrion membrane. Its function is as follows. Mitochondrial membrane ATP synthase (F(1)F(0) ATP synthase or Complex V) produces ATP from ADP in the presence of a proton gradient across the membrane which is generated by electron transport complexes of the respiratory chain. F-type ATPases consist of two structural domains, F(1) - containing the extramembraneous catalytic core and F(0) - containing the membrane proton channel, linked together by a central stalk and a peripheral stalk. During catalysis, ATP synthesis in the catalytic domain of F(1) is coupled via a rotary mechanism of the central stalk subunits to proton translocation. Part of the complex F(0) domain. A homomeric c-ring of probably 10 subunits is part of the complex rotary element. The sequence is that of ATP synthase subunit 9, mitochondrial (ATP9) from Trichophyton rubrum (Athlete's foot fungus).